The following is a 254-amino-acid chain: Cold shock-induced protein TIR1 (254 aa).

The first 18 residues, 1 to 18 (MAYTKIALFAAIAALASA), serve as a signal peptide directing secretion. The segment at 110–213 (NGDASSSAAP…SSTGAKTSAI (104 aa)) is disordered. Residues 113 to 197 (ASSSAAPSSS…SAAPSSTEAK (85 aa)) are compositionally biased toward low complexity. Repeat copies occupy residues 114 to 119 (SSSAAP), 120 to 125 (SSSAAP), 126 to 131 (TSSAAP), 132 to 137 (SSSAAP), 138 to 143 (TSSAAS), 144 to 155 (SSSEAKSSSAAP), 156 to 167 (SSSEAKSSSAAP), 168 to 179 (SSSEAKSSSAAP), 180 to 191 (SSSEAKSSSAAP), and 192 to 203 (SSTEAKITSAAP). The tract at residues 114–143 (SSSAAPSSSAAPTSSAAPSSSAAPTSSAAS) is 5 X 6 AA approximate tandem repeats, Ala/Ser-rich. Residues 144-203 (SSSEAKSSSAAPSSSEAKSSSAAPSSSEAKSSSAAPSSSEAKSSSAAPSSTEAKITSAAP) are 5 X 12 AA approximate tandem repeats, Ala/Ser-rich. Over residues 201-213 (AAPSSTGAKTSAI) the composition is skewed to polar residues. The PIR1/2/3 repeat unit spans residues 210-224 (TSAISQITDGQIQAT). Asparagine 233 is lipidated: GPI-anchor amidated asparagine. Residues 234-254 (GAAKAFVGMGAGVVAAAAMLL) constitute a propeptide, removed in mature form.

The protein belongs to the SRP1/TIP1 family. O-glycosylated. Post-translationally, the GPI-anchor is attached to the protein in the endoplasmic reticulum and serves to target the protein to the cell surface. There, the glucosamine-inositol phospholipid moiety is cleaved off and the GPI-modified mannoprotein is covalently attached via its lipidless GPI glycan remnant to the 1,6-beta-glucan of the outer cell wall layer. In terms of processing, covalently linked to beta-1,3-glucan of the inner cell wall layer via an alkali-sensitive ester linkage between the gamma-carboxyl group of glutamic acids, arising from a specific glutamine within the PIR1/2/3 repeat, and hydroxyl groups of glucoses of beta-1,3-glucan chains.

It is found in the secreted. It localises to the cell wall. The protein localises to the membrane. Component of the cell wall. Required for anaerobic growth. The polypeptide is Cold shock-induced protein TIR1 (TIR1) (Saccharomyces cerevisiae (strain ATCC 204508 / S288c) (Baker's yeast)).